The chain runs to 303 residues: UDP-N-acetylenolpyruvoylglucosamine reductase (303 aa).

The region spanning 23–188 is the FAD-binding PCMH-type domain; the sequence is KVGGPADYLV…ISAKFALKPG (166 aa). Arg-167 is an active-site residue. Ser-217 (proton donor) is an active-site residue. Glu-287 is an active-site residue.

Belongs to the MurB family. FAD serves as cofactor.

It is found in the cytoplasm. The enzyme catalyses UDP-N-acetyl-alpha-D-muramate + NADP(+) = UDP-N-acetyl-3-O-(1-carboxyvinyl)-alpha-D-glucosamine + NADPH + H(+). The protein operates within cell wall biogenesis; peptidoglycan biosynthesis. Its function is as follows. Cell wall formation. The protein is UDP-N-acetylenolpyruvoylglucosamine reductase of Streptococcus uberis (strain ATCC BAA-854 / 0140J).